The sequence spans 216 residues: Orotate phosphoribosyltransferase (216 aa).

Lys-30 is a binding site for 5-phospho-alpha-D-ribose 1-diphosphate. 38 to 39 is a binding site for orotate; sequence FF. Residues 75 to 76, Arg-102, Lys-103, Lys-106, His-108, and 128 to 136 contribute to the 5-phospho-alpha-D-ribose 1-diphosphate site; these read YK and DDVITAGTA. Orotate contacts are provided by Thr-132 and Arg-160.

The protein belongs to the purine/pyrimidine phosphoribosyltransferase family. PyrE subfamily. Homodimer. Requires Mg(2+) as cofactor.

It carries out the reaction orotidine 5'-phosphate + diphosphate = orotate + 5-phospho-alpha-D-ribose 1-diphosphate. It participates in pyrimidine metabolism; UMP biosynthesis via de novo pathway; UMP from orotate: step 1/2. Catalyzes the transfer of a ribosyl phosphate group from 5-phosphoribose 1-diphosphate to orotate, leading to the formation of orotidine monophosphate (OMP). This is Orotate phosphoribosyltransferase from Acinetobacter baumannii (strain AB307-0294).